The chain runs to 739 residues: MSLMLEPNPTQIKEERIYAEMGLTDEEFAMVEKILGRLPNYTETGLFSVMWSEHCSYKNSKPVLRKFPTTGERVLQGPGEGAGIVDIGDNQAVVFKMESHNHPSAIEPYQGAATGVGGIIRDVFSMGARPVALLNSLRFGELQSPRVKYLFEEVVAGIAGYGNCIGIPTVGGEVQFDPCYEGNPLVNAMCVGLINHEDIKKGQAHGAGNTVMYVGASTGRDGIHGATFASEELSESSEAKRPAVQVGDPFMEKLLIEACLELIQSDALVGIQDMGAAGLTSSSAEMASKAGMGIEMYLDDVPQRETGMTPYEMMLSESQERMLIVVKKGREQEIVDLFEKYGLAAVTMGKVTEDKMLRLFHKGEMVAEVPADALAEEAPIYHKPSQEAAYFAEFQQMKMETPKVENYKETLFALLQQPTIASKEWVYDQYDYQVRTSTVVTPGSDAAVVRVRGTEKGLAMTTDCNSRYIYLDPEMGGKIAVAEAARNIVCSGGEPLAITDCLNFGNPEKPEIFWQIEKSVDGMSEACRTLQTPVIGGNVSMYNERSGEAVYPTPTVGMVGLVHDLKHVTTQEFKQAGDLVYIIGETKAEFGGSELQKMLHGKIFGQSPSIDLDVELKRQKQVLAAIQAGLVQSAHDVAEGGLAVAISESAIGANGLGATVKLDGEATAALFAESQSRFVITVKRENKEAFEKAVEAIQVGEVTNTNEVTIHNEENEVLLTANVDEMRKAWKGAIPCLLK.

Residue H54 is part of the active site. The ATP site is built by Y57 and K96. E98 is a Mg(2+) binding site. Substrate contacts are provided by residues S99–H102 and R121. H100 serves as the catalytic Proton acceptor. D122 contacts Mg(2+). Q245 serves as a coordination point for substrate. Position 273 (D273) interacts with Mg(2+). A substrate-binding site is contributed by E317–Q319. ATP contacts are provided by D500 and G537. N538 contacts Mg(2+). S540 contacts substrate.

The protein belongs to the FGAMS family. Monomer. Part of the FGAM synthase complex composed of 1 PurL, 1 PurQ and 2 PurS subunits.

It localises to the cytoplasm. The enzyme catalyses N(2)-formyl-N(1)-(5-phospho-beta-D-ribosyl)glycinamide + L-glutamine + ATP + H2O = 2-formamido-N(1)-(5-O-phospho-beta-D-ribosyl)acetamidine + L-glutamate + ADP + phosphate + H(+). Its pathway is purine metabolism; IMP biosynthesis via de novo pathway; 5-amino-1-(5-phospho-D-ribosyl)imidazole from N(2)-formyl-N(1)-(5-phospho-D-ribosyl)glycinamide: step 1/2. In terms of biological role, part of the phosphoribosylformylglycinamidine synthase complex involved in the purines biosynthetic pathway. Catalyzes the ATP-dependent conversion of formylglycinamide ribonucleotide (FGAR) and glutamine to yield formylglycinamidine ribonucleotide (FGAM) and glutamate. The FGAM synthase complex is composed of three subunits. PurQ produces an ammonia molecule by converting glutamine to glutamate. PurL transfers the ammonia molecule to FGAR to form FGAM in an ATP-dependent manner. PurS interacts with PurQ and PurL and is thought to assist in the transfer of the ammonia molecule from PurQ to PurL. The polypeptide is Phosphoribosylformylglycinamidine synthase subunit PurL (Bacillus cereus (strain AH187)).